A 192-amino-acid chain; its full sequence is MPVAKKYFEIRWHGRAGQGAKSASQMLAEAALEAGKYVQAFPEYGAERTGAPMRAFNRIGDEYIRVRSAVENPDVVVVIDETLLSPAIVEGLSEDGILLVNTVKDFEFVRKKTGFNGKICVVDATDIALQEIKRGIPNTPMLGALVRVTGIVPLEAIEKRIEKMFGKKFPQEVIDANKRALRRGYEEVKCSE.

Heterotetramer of one alpha, one beta, one delta and one gamma chain.

It catalyses the reaction 2 oxidized [2Fe-2S]-[ferredoxin] + pyruvate + CoA = 2 reduced [2Fe-2S]-[ferredoxin] + acetyl-CoA + CO2 + H(+). The polypeptide is Pyruvate synthase subunit PorC (porC) (Thermotoga maritima (strain ATCC 43589 / DSM 3109 / JCM 10099 / NBRC 100826 / MSB8)).